Here is a 663-residue protein sequence, read N- to C-terminus: Leishmanolysin-like peptidase (663 aa).

H246 contacts Zn(2+). Residue E247 is part of the active site. Zn(2+) is bound by residues H250 and H353.

This sequence belongs to the peptidase M8 family. Zn(2+) serves as cofactor.

Its subcellular location is the cytoplasm. Functionally, essential for the coordination of mitotic progression, and also plays a role in cell migration. The polypeptide is Leishmanolysin-like peptidase (Caenorhabditis elegans).